We begin with the raw amino-acid sequence, 93 residues long: UPF0473 protein BH1270 (93 aa).

The protein belongs to the UPF0473 family.

This chain is UPF0473 protein BH1270, found in Halalkalibacterium halodurans (strain ATCC BAA-125 / DSM 18197 / FERM 7344 / JCM 9153 / C-125) (Bacillus halodurans).